The chain runs to 356 residues: Chorismate synthase (356 aa).

The NADP(+) site is built by Arg44 and Arg49. FMN contacts are provided by residues 121–123, Gly278, 293–297, and Arg320; these read HFS and KPTPS.

This sequence belongs to the chorismate synthase family. Requires FMNH2 as cofactor.

The enzyme catalyses 5-O-(1-carboxyvinyl)-3-phosphoshikimate = chorismate + phosphate. It participates in metabolic intermediate biosynthesis; chorismate biosynthesis; chorismate from D-erythrose 4-phosphate and phosphoenolpyruvate: step 7/7. Catalyzes the anti-1,4-elimination of the C-3 phosphate and the C-6 proR hydrogen from 5-enolpyruvylshikimate-3-phosphate (EPSP) to yield chorismate, which is the branch point compound that serves as the starting substrate for the three terminal pathways of aromatic amino acid biosynthesis. This reaction introduces a second double bond into the aromatic ring system. The chain is Chorismate synthase from Thermococcus gammatolerans (strain DSM 15229 / JCM 11827 / EJ3).